We begin with the raw amino-acid sequence, 622 residues long: DNA topoisomerase 3 (622 aa).

In terms of domain architecture, Toprim spans 2–148 (RVLCVAEKNS…SIQVIRADFN (147 aa)). A Topo IA-type catalytic domain is found at 166–596 (SKNAADAVDA…MILTQFRDVF (431 aa)). Tyr-330 (O-(5'-phospho-DNA)-tyrosine intermediate) is an active-site residue.

The protein belongs to the type IA topoisomerase family. As to quaternary structure, interacts with hus2.

It catalyses the reaction ATP-independent breakage of single-stranded DNA, followed by passage and rejoining.. Releases the supercoiling and torsional tension of DNA introduced during the DNA replication and transcription by transiently cleaving and rejoining one strand of the DNA duplex. Introduces a single-strand break via transesterification at a target site in duplex DNA. The scissile phosphodiester is attacked by the catalytic tyrosine of the enzyme, resulting in the formation of a DNA-(5'-phosphotyrosyl)-enzyme intermediate and the expulsion of a 3'-OH DNA strand. The free DNA strand than undergoes passage around the unbroken strand thus removing DNA supercoils. Finally, in the religation step, the DNA 3'-OH attacks the covalent intermediate to expel the active-site tyrosine and restore the DNA phosphodiester backbone. The chain is DNA topoisomerase 3 (top3) from Schizosaccharomyces pombe (strain 972 / ATCC 24843) (Fission yeast).